A 1141-amino-acid polypeptide reads, in one-letter code: MATVKNLRIGKSPNRLIQDLDVFDSPSAGWNDPWSPHSSRYHWQLHSNLGESAVFDENDFWCVCQKTRKHLHVKVRRDRGKPLIEEPEENYGIKDRIPVYYEEEELPEPHVTSPTKSEFATTSTCMKWSSKTTKSEIEVEWRDSYLDANCIKEIIDSRRPSFASLLTKKSSSHQGSSHSSQPSLFTTFTSLELFLRNVLVHNDQRAISAAPEGTFERHVGKGRQIQSLMKSLLFEYHHENVNYVPTIADAPLTDEQKLNLYLARNELIVLANHFRDTKEDPAIVANPFPVRLARPALINAFGVPNYDSVVPMYTTVFRDNSASLPDDPAFIALGITNDYPDSFVRYFYEEQKKNDEANVRVYADALAHIYNLRKSSFLRDLIAADRKNGIVSSDVIQAAYSSLGLEAEVGPDYRYSQEKIFEAFHSALLRKPEFARAIRNDLETIGYARKSSEILNYVLSTEQAFYTVNEAYQWLGIKSNTEDAMVASVALVKFEDDSDKAIEAVKWIAEERNSSILYDFLASQGRPSNKKPKEVPMDEDLAYNTLGVQDRALSDDVLINVYGFAVEDHPEQSDTLRAALKCIGEVRNSRLITHYLEHGNLDIPPEVSSLDTPIGLENTGNLCYLNSLIQYYFIIKPLRNAILDIDENKDLNMIENKEAVKKVGGRIVTRIEFLRALQFTYELRKLFIELITSKSSSVHPSSVLTYLALIPLTLDQVKSGTSSVMDLSSSRELSNLNERSITIDPRAEEQAQGLEQEQGQDEAKSPAEQSSSVNLIDFPMANTNGESQTQPHYFEVSEEEINSSMDLGRQQDVLECIDHVLFQLEASLGRISNSEDRLGSDNDLIRRLFSGKLKQTLNDASQGVRSNYEIFSHLIVDLFEEKQTLYDALDGVFETVNIDMGSETAQRSLCITELPIILQLQIQRVQFDRTTGQPFKSNAFVEFGKELSMDRYVEDTDGKMAPLLQRYWDLKREIINLQKRQQLLLTTNSNLMSSVDTLSILSKWAAQQQDSRLPINPKLPDILQEEINNVVAEVDMLKKQEASLKEERTHLFDNYISHSYDLLAVFVHRGQASFGHYWTYIHDFENNVYRKYNDEYVTVVDESEIFADTTGNNANPYMLTYIRKEYRHIIECVHREHNLLL.

At T112 the chain carries Phosphothreonine. Residue S113 is modified to Phosphoserine. Position 115 is a phosphothreonine (T115). The USP domain occupies 614–1124 (IGLENTGNLC…NPYMLTYIRK (511 aa)). Residue C623 is the Nucleophile of the active site. A Phosphothreonine modification is found at T721. S722 is subject to Phosphoserine. The tract at residues 748–770 (EEQAQGLEQEQGQDEAKSPAEQS) is disordered. The active-site Proton acceptor is the H1076.

This sequence belongs to the peptidase C19 family.

The enzyme catalyses Thiol-dependent hydrolysis of ester, thioester, amide, peptide and isopeptide bonds formed by the C-terminal Gly of ubiquitin (a 76-residue protein attached to proteins as an intracellular targeting signal).. The protein is Probable ubiquitin carboxyl-terminal hydrolase 2 (ubp2) of Schizosaccharomyces pombe (strain 972 / ATCC 24843) (Fission yeast).